We begin with the raw amino-acid sequence, 416 residues long: Adrenocortical dysplasia protein (416 aa).

The PWI motif lies at 11-13; sequence PWI. Residue serine 25 is modified to Phosphoserine. Residues 156-245 are interaction with POT1; that stretch reads ESASSSAGLT…SSTGSSQKAR (90 aa). A compositionally biased stretch (polar residues) spans 234–251; it reads ILSSTGSSQKARGTSASP. The interval 234–306 is disordered; the sequence is ILSSTGSSQK…TSPPCNSTPS (73 aa). The segment covering 259–272 has biased composition (low complexity); it reads SGASVSLLSALATS. The segment covering 273 to 292 has biased composition (polar residues); sequence DPGQMDSSQSPPAVGSTSPR. Phosphoserine occurs at positions 313 and 317. Lysine 345 participates in a covalent cross-link: Glycyl lysine isopeptide (Lys-Gly) (interchain with G-Cter in SUMO2).

Component of the shelterin complex (telosome) composed of TERF1, TERF2, TINF2, TERF2IP ACD and POT1. Forms heterodimers with POT1. Identified in a complex with POT1 and single-stranded telomeric DNA. Interacts with STN1 and TINF2. Ubiquitous.

It localises to the nucleus. The protein localises to the chromosome. The protein resides in the telomere. In terms of biological role, component of the shelterin complex (telosome) that is involved in the regulation of telomere length and protection. Shelterin associates with arrays of double-stranded TTAGGG repeats added by telomerase and protects chromosome ends. Without its protective activity, telomeres are no longer hidden from the DNA damage surveillance and chromosome ends are inappropriately processed by DNA repair pathways. Promotes binding of POT1 to single-stranded telomeric DNA. Modulates the inhibitory effects of POT1 on telomere elongation. The ACD-POT1 heterodimer enhances telomere elongation by recruiting telomerase to telomeres and increasing its processivity. May play a role in organogenesis. The chain is Adrenocortical dysplasia protein from Mus musculus (Mouse).